Reading from the N-terminus, the 187-residue chain is MIMIDEIQEDAAQRMDKSLNALKQAFARLRANRAHTSLLDHITVSYYGNNVPLNQVANVSVEDARTLTVTPWERQMVPVIEKAIMTSELGLNPVTAGTVIRVPLPVLTEERRREMVRLVRQEAEAARVAMRNIRRDSNHTIKELIKEKEISEDDQRRAEEAIQKITDNHITQVDELLAVKEQDLMEV.

This sequence belongs to the RRF family.

It localises to the cytoplasm. Its function is as follows. Responsible for the release of ribosomes from messenger RNA at the termination of protein biosynthesis. May increase the efficiency of translation by recycling ribosomes from one round of translation to another. This chain is Ribosome-recycling factor, found in Nitrosococcus oceani (strain ATCC 19707 / BCRC 17464 / JCM 30415 / NCIMB 11848 / C-107).